A 241-amino-acid chain; its full sequence is Large ribosomal subunit protein uL2 (241 aa).

Positions 201–241 (VDHPHGGGNRQHPGRPTTVSRHAPPGRKVGSIAAKRTGLKR) are disordered.

The protein belongs to the universal ribosomal protein uL2 family. As to quaternary structure, part of the 50S ribosomal subunit. Forms a bridge to the 30S subunit in the 70S ribosome.

Functionally, one of the primary rRNA binding proteins. Required for association of the 30S and 50S subunits to form the 70S ribosome, for tRNA binding and peptide bond formation. It has been suggested to have peptidyltransferase activity; this is somewhat controversial. Makes several contacts with the 16S rRNA in the 70S ribosome. In Methanobrevibacter smithii (strain ATCC 35061 / DSM 861 / OCM 144 / PS), this protein is Large ribosomal subunit protein uL2.